Consider the following 207-residue polypeptide: Peptidyl-tRNA hydrolase (207 aa).

Residue Tyr15 participates in tRNA binding. His20 serves as the catalytic Proton acceptor. TRNA-binding residues include Phe66, Asn68, and Asn114. The tract at residues 187–207 is disordered; the sequence is HTTKPPRPKPARPATAESDKG. The segment covering 198–207 has biased composition (low complexity); that stretch reads RPATAESDKG.

The protein belongs to the PTH family. Monomer.

The protein resides in the cytoplasm. The catalysed reaction is an N-acyl-L-alpha-aminoacyl-tRNA + H2O = an N-acyl-L-amino acid + a tRNA + H(+). Hydrolyzes ribosome-free peptidyl-tRNAs (with 1 or more amino acids incorporated), which drop off the ribosome during protein synthesis, or as a result of ribosome stalling. Functionally, catalyzes the release of premature peptidyl moieties from peptidyl-tRNA molecules trapped in stalled 50S ribosomal subunits, and thus maintains levels of free tRNAs and 50S ribosomes. The sequence is that of Peptidyl-tRNA hydrolase from Delftia acidovorans (strain DSM 14801 / SPH-1).